The following is a 217-amino-acid chain: MINRAQLLDTLASQAPRDFEAQALGLVPIVVETSGRGERSYDIYSRLLKERIVFMVGEVNDQTANLVVAQLLFLESENPDKDISLYINSPGGSVSAGMAIYDTMQFVKPDVSTLCMGLAASMGAFLLASGAKGKRYALPNARVMIHQPLGGARGQASDIEIQAREILYLRDRLNHLLAHHTGQDVERIARDTDRDNFMSSEDAKAYGLIDHVSTKRP.

The active-site Nucleophile is Ser121. His146 is a catalytic residue.

This sequence belongs to the peptidase S14 family. As to quaternary structure, fourteen ClpP subunits assemble into 2 heptameric rings which stack back to back to give a disk-like structure with a central cavity, resembling the structure of eukaryotic proteasomes.

The protein localises to the cytoplasm. It carries out the reaction Hydrolysis of proteins to small peptides in the presence of ATP and magnesium. alpha-casein is the usual test substrate. In the absence of ATP, only oligopeptides shorter than five residues are hydrolyzed (such as succinyl-Leu-Tyr-|-NHMec, and Leu-Tyr-Leu-|-Tyr-Trp, in which cleavage of the -Tyr-|-Leu- and -Tyr-|-Trp bonds also occurs).. Its function is as follows. Cleaves peptides in various proteins in a process that requires ATP hydrolysis. Has a chymotrypsin-like activity. Plays a major role in the degradation of misfolded proteins. The sequence is that of ATP-dependent Clp protease proteolytic subunit from Burkholderia mallei (strain NCTC 10247).